A 200-amino-acid chain; its full sequence is MAKGDPKKPKGKMSAYAFFVQTCREEHKKKNPEVPVNFAEFSKKCSERWKTMSSKEKSKFDEMAKADKVRYDREMKDYGPAKGGKKKKDPNAPKRPPSGFFLFCSEFRPKIKSTNPGISIGDVAKKLGEMWNNLSDNEKQPYVTKAAKLKEKYEKDVADYKSKGKFDGAKGPAKVARKKVEEEEEEEEEEEEEEEEEEDE.

Residue K3 is modified to N6-acetyllysine. 2 consecutive DNA-binding regions (HMG box) follow at residues 9–79 and 93–161; these read PKGK…KDYG and PKRP…ADYK. Cysteine sulfonic acid (-SO3H); alternate is present on C23. A disulfide bridge connects residues C23 and C45. N6-acetyllysine is present on residues K30 and K43. C45 carries the post-translational modification Cysteine sulfonic acid (-SO3H); alternate. The interval 71–97 is disordered; the sequence is YDREMKDYGPAKGGKKKKDPNAPKRPP. S98 carries the post-translational modification Phosphoserine. The residue at position 104 (C104) is a Cysteine sulfonic acid (-SO3H). Residues K112 and K139 each carry the N6-acetyllysine modification. The segment at 161 to 200 is disordered; it reads KSKGKFDGAKGPAKVARKKVEEEEEEEEEEEEEEEEEEDE. Residues 182-200 are compositionally biased toward acidic residues; it reads EEEEEEEEEEEEEEEEEDE.

This sequence belongs to the HMGB family. Post-translationally, reduction/oxidation of cysteine residues Cys-23, Cys-45 and Cys-104 and a possible intramolecular disulfide bond involving Cys-23 and Cys-45 give rise to different redox forms with specific functional activities in various cellular compartments: 1- fully reduced HMGB3 (HMGB3C23hC45hC104h), 2- disulfide HMGB3 (HMGB3C23-C45C104h) and 3- sulfonyl HMGB3 (HMGB3C23soC45soC104so). In terms of tissue distribution, expressed in bone marrow cells, specifically in primitive Lin-, c-kit+, Sca-1+, IL-7Ralpha- cells, and Ter119+ erythroid cells.

The protein resides in the nucleus. It localises to the chromosome. Its subcellular location is the cytoplasm. Multifunctional protein with various roles in different cellular compartments. May act in a redox sensitive manner. Associates with chromatin and binds DNA with a preference for non-canonical DNA structures such as single-stranded DNA. Can bend DNA and enhance DNA flexibility by looping thus providing a mechanism to promote activities on various gene promoters. Proposed to be involved in the innate immune response to nucleic acids by acting as a cytoplasmic promiscuous immunogenic DNA/RNA sensor. Negatively regulates B-cell and myeloid cell differentiation. In hematopoietic stem cells may regulate the balance between self-renewal and differentiation. Involved in negative regulation of canonical Wnt signaling. This Mus musculus (Mouse) protein is High mobility group protein B3 (Hmgb3).